The following is a 735-amino-acid chain: Protein RETICULATA-RELATED 5, chloroplastic (735 aa).

A chloroplast-targeting transit peptide spans 1-75 (MKPTTNGGLL…TRRAILVAPP (75 aa)). Transmembrane regions (helical) follow at residues 519-539 (ASVV…FISY) and 582-602 (VIIG…AAVG). Residues 714–726 (ASQSTVEYSTTEE) are compositionally biased toward polar residues. Residues 714 to 735 (ASQSTVEYSTTEEASMDDLKNQ) form a disordered region.

Belongs to the RETICULATA family.

Its subcellular location is the plastid. The protein localises to the chloroplast membrane. Functionally, may play a role in leaf development. The chain is Protein RETICULATA-RELATED 5, chloroplastic from Arabidopsis thaliana (Mouse-ear cress).